The following is a 256-amino-acid chain: Glucosamine-6-phosphate deaminase (256 aa).

Asp-68 acts as the Proton acceptor; for enolization step in catalysis. Asn-137 functions as the For ring-opening step in the catalytic mechanism. The active-site Proton acceptor; for ring-opening step is His-139. Glu-144 serves as the catalytic For ring-opening step.

This sequence belongs to the glucosamine/galactosamine-6-phosphate isomerase family. NagB subfamily.

The catalysed reaction is alpha-D-glucosamine 6-phosphate + H2O = beta-D-fructose 6-phosphate + NH4(+). It functions in the pathway amino-sugar metabolism; N-acetylneuraminate degradation; D-fructose 6-phosphate from N-acetylneuraminate: step 5/5. Catalyzes the reversible isomerization-deamination of glucosamine 6-phosphate (GlcN6P) to form fructose 6-phosphate (Fru6P) and ammonium ion. The protein is Glucosamine-6-phosphate deaminase of Mycoplasmopsis pulmonis (strain UAB CTIP) (Mycoplasma pulmonis).